Reading from the N-terminus, the 119-residue chain is Large ribosomal subunit protein uL14 (119 aa).

This sequence belongs to the universal ribosomal protein uL14 family. Part of the 50S ribosomal subunit. Forms a cluster with proteins L3 and L19. In the 70S ribosome, L14 and L19 interact and together make contacts with the 16S rRNA in bridges B5 and B8.

Its function is as follows. Binds to 23S rRNA. Forms part of two intersubunit bridges in the 70S ribosome. This Wolbachia pipientis subsp. Culex pipiens (strain wPip) protein is Large ribosomal subunit protein uL14.